Reading from the N-terminus, the 448-residue chain is Protein EVI2B (448 aa).

Residues 1 to 21 form the signal peptide; it reads MDPKYFILILFCGHLNNTFFS. Residues N16 and N50 are each glycosylated (N-linked (GlcNAc...) asparagine). Topologically, residues 22–202 are extracellular; it reads KTETITTEKQ…QTPQKNNYNS (181 aa). A disordered region spans residues 74-108; the sequence is AKVTAGQPTPAVYTSSEKPEAHTSAGQPLAYNTKQ. The segment covering 97-108 has biased composition (polar residues); it reads SAGQPLAYNTKQ. N-linked (GlcNAc...) asparagine glycosylation occurs at N114. A helical membrane pass occupies residues 203 to 226; sequence IAAILIGVLLTSMLVAIIIIVLWK. Over 227–448 the chain is Cytoplasmic; that stretch reads CLRKPVLNDQ…SLPPPPAELL (222 aa). T249 carries the phosphothreonine modification. A phosphoserine mark is found at S268, S271, S278, and S294. Disordered regions lie at residues 298 to 372 and 427 to 448; these read IEDS…DSTS and SIPP…AELL. 2 stretches are compositionally biased toward polar residues: residues 313–333 and 350–372; these read VNGT…VSSS and QESN…DSTS.

As to expression, bone marrow, peripheral blood mononuclear cells, fibroblasts and Epstein-Barr virus-transformed lymphoblastoid cell lines. Strongly expressed in granulocytic cells, and weakly on lymphocytes cells.

The protein localises to the membrane. Required for granulocyte differentiation and functionality of hematopoietic progenitor cells through the control of cell cycle progression and survival of hematopoietic progenitor cells. This Homo sapiens (Human) protein is Protein EVI2B.